Consider the following 495-residue polypeptide: Ribosome biogenesis protein YTM1 (495 aa).

The tract at residues 15-97 (VKVIFTTTEP…ETTLTLQYVR (83 aa)) is ubiquitin-like (UBL) domain. 7 WD repeats span residues 129–168 (WSSAANSSAAVQPGQERVLSASYDGLLRIWNASGSVIATS), 175–213 (GHTASIKAAKFLTSDRLASAGMDRTVRVWKYTESDHFTG), 223–262 (GHTGSVDWLDVDGHSKHILTASADGAIGFWSASKASAPEP), 264–295 (ASLLPGAHVSKRRKATSSVSTAQRGPLGLWSI), 296–337 (HTAP…STLT), 386–426 (GHAN…PATK), and 458–495 (GDGCKVFSVVWDKLGIFSGGEDKKVQVNRGRNIVTEQK).

The protein belongs to the WD repeat WDR12/YTM1 family. Component of the NOP7 complex, composed of ERB1, NOP7 and YTM1. The complex is held together by ERB1, which interacts with NOP7 via its N-terminal domain and with YTM1 via a high-affinity interaction between the seven-bladed beta-propeller domains of the 2 proteins. The NOP7 complex associates with the 66S pre-ribosome. Interacts (via UBL domain) with MDN1 (via VWFA/MIDAS domain).

Its subcellular location is the nucleus. The protein resides in the nucleolus. It is found in the nucleoplasm. Its function is as follows. Component of the NOP7 complex, which is required for maturation of the 25S and 5.8S ribosomal RNAs and formation of the 60S ribosome. The sequence is that of Ribosome biogenesis protein YTM1 from Chaetomium thermophilum (strain DSM 1495 / CBS 144.50 / IMI 039719) (Thermochaetoides thermophila).